The following is a 263-amino-acid chain: H-2 class II histocompatibility antigen, A-K beta chain (263 aa).

The signal sequence occupies residues 1-27 (MALQIPSLLLLAAVVVLTVLSSPGTEG). Residues 28 to 120 (GNSERHFVHQ…TETPTSLRRL (93 aa)) form a beta-1 region. Residues 28–224 (GNSERHFVHQ…RAQSESARSK (197 aa)) are Extracellular-facing. 2 disulfides stabilise this stretch: C42–C104 and C143–C199. The N-linked (GlcNAc...) asparagine glycan is linked to N46. Residues 121–214 (EQPSVVISLS…SLKSPITVEW (94 aa)) are beta-2. The 89-residue stretch at 123-211 (PSVVISLSRT…EHPSLKSPIT (89 aa)) folds into the Ig-like C1-type domain. Positions 215–224 (RAQSESARSK) are connecting peptide. Residues 225 to 245 (MLSGIGGCVLGVIFLGLGLFI) traverse the membrane as a helical segment. Residues 246 to 263 (RHRSQKGPRGPPPAGLLQ) are Cytoplasmic-facing.

Belongs to the MHC class II family. In terms of processing, ubiquitinated in immature dendritic cells leading to down-regulation of MHC class II.

The protein resides in the membrane. This chain is H-2 class II histocompatibility antigen, A-K beta chain (H2-Ab1), found in Mus musculus (Mouse).